Here is an 82-residue protein sequence, read N- to C-terminus: ATP synthase subunit c (82 aa).

Transmembrane regions (helical) follow at residues 5-25 and 57-77; these read IASA…IGPG and LAFM…LLFA.

Belongs to the ATPase C chain family. In terms of assembly, F-type ATPases have 2 components, F(1) - the catalytic core - and F(0) - the membrane proton channel. F(1) has five subunits: alpha(3), beta(3), gamma(1), delta(1), epsilon(1). F(0) has four main subunits: a(1), b(1), b'(1) and c(10-14). The alpha and beta chains form an alternating ring which encloses part of the gamma chain. F(1) is attached to F(0) by a central stalk formed by the gamma and epsilon chains, while a peripheral stalk is formed by the delta, b and b' chains.

Its subcellular location is the cellular thylakoid membrane. In terms of biological role, f(1)F(0) ATP synthase produces ATP from ADP in the presence of a proton or sodium gradient. F-type ATPases consist of two structural domains, F(1) containing the extramembraneous catalytic core and F(0) containing the membrane proton channel, linked together by a central stalk and a peripheral stalk. During catalysis, ATP synthesis in the catalytic domain of F(1) is coupled via a rotary mechanism of the central stalk subunits to proton translocation. Its function is as follows. Key component of the F(0) channel; it plays a direct role in translocation across the membrane. A homomeric c-ring of between 10-14 subunits forms the central stalk rotor element with the F(1) delta and epsilon subunits. This Cyanothece sp. (strain PCC 7425 / ATCC 29141) protein is ATP synthase subunit c.